The chain runs to 142 residues: Large ribosomal subunit protein uL11 (142 aa).

This sequence belongs to the universal ribosomal protein uL11 family. In terms of assembly, part of the ribosomal stalk of the 50S ribosomal subunit. Interacts with L10 and the large rRNA to form the base of the stalk. L10 forms an elongated spine to which L12 dimers bind in a sequential fashion forming a multimeric L10(L12)X complex. One or more lysine residues are methylated.

In terms of biological role, forms part of the ribosomal stalk which helps the ribosome interact with GTP-bound translation factors. The sequence is that of Large ribosomal subunit protein uL11 from Bartonella tribocorum (strain CIP 105476 / IBS 506).